Here is a 311-residue protein sequence, read N- to C-terminus: Probable cell division protein WhiA (311 aa).

The segment at residues 277–311 (TLKEVADQIPDGPISKSGVNHRFKKLHEIAESLRE) is a DNA-binding region (H-T-H motif).

Belongs to the WhiA family.

Its function is as follows. Involved in cell division and chromosome segregation. The chain is Probable cell division protein WhiA from Lactobacillus acidophilus (strain ATCC 700396 / NCK56 / N2 / NCFM).